Consider the following 467-residue polypeptide: GTPase Der (467 aa).

EngA-type G domains lie at 25 to 188 and 199 to 372; these read PVVA…PEAP and RRVA…ASWE. GTP-binding positions include 31-38, 78-82, 140-143, 205-212, 252-256, and 317-320; these read GRPNVGKS, DTGGW, NKAD, DTAGL, and NKWD. One can recognise a KH-like domain in the interval 373-455; that stretch reads TRVPTAQLNA…PIEIAVRPRK (83 aa).

This sequence belongs to the TRAFAC class TrmE-Era-EngA-EngB-Septin-like GTPase superfamily. EngA (Der) GTPase family. In terms of assembly, associates with the 50S ribosomal subunit.

In terms of biological role, GTPase that plays an essential role in the late steps of ribosome biogenesis. The chain is GTPase Der from Salinispora arenicola (strain CNS-205).